We begin with the raw amino-acid sequence, 164 residues long: Transcriptional repressor NrdR (164 aa).

A zinc finger spans residues 3–34 (CPFCSAQDTKVIDSRLVADGVQIRRRRECLSC). The 91-residue stretch at 49-139 (PRLVKTDGTR…VYRSFQDISE (91 aa)) folds into the ATP-cone domain.

It belongs to the NrdR family. Zn(2+) is required as a cofactor.

Its function is as follows. Negatively regulates transcription of bacterial ribonucleotide reductase nrd genes and operons by binding to NrdR-boxes. The chain is Transcriptional repressor NrdR from Alcanivorax borkumensis (strain ATCC 700651 / DSM 11573 / NCIMB 13689 / SK2).